Consider the following 561-residue polypeptide: Zinc finger protein 394 (561 aa).

The interval 1–61 (MNSSLTAQRR…NYPAASPDPE (61 aa)) is disordered. Ser-12 is subject to Phosphoserine. Lys-40 participates in a covalent cross-link: Glycyl lysine isopeptide (Lys-Gly) (interchain with G-Cter in SUMO2). The SCAN box domain maps to 64 to 146 (RLHFRQLRYQ…AVVRALQRAL (83 aa)). Residues 155 to 230 (VTFEDTAVSL…LQEAFQGKRP (76 aa)) form the KRAB domain. The interval 182 to 201 (ESAQKDSGSTVPPSLESRVE) is disordered. Residues Lys-203 and Lys-228 each participate in a glycyl lysine isopeptide (Lys-Gly) (interchain with G-Cter in SUMO2) cross-link. Residues 231 to 285 (LFSKCGSTHEDRVEKQSGDPLPLKLENSPEAEGLNSISDVNKNGSIEGEDSKNNE) are disordered. The segment covering 237 to 247 (STHEDRVEKQS) has biased composition (basic and acidic residues). Lys-254 participates in a covalent cross-link: Glycyl lysine isopeptide (Lys-Gly) (interchain with G-Cter in SUMO2). Residues 265-274 (NSISDVNKNG) show a composition bias toward polar residues. Lys-282 is covalently cross-linked (Glycyl lysine isopeptide (Lys-Gly) (interchain with G-Cter in SUMO2)). 7 consecutive C2H2-type zinc fingers follow at residues 358–380 (YKCGNCGKSFKQRSDLFRHQRIH), 386–408 (YGCQECGKSFSQSAALTKHQRTH), 414–436 (YTCLKCGERFRQNSHLNRHQSTH), 442–463 (FKCEECGETCHISNLFRHQRLH), 469–491 (YKCEECEKSFKQRSDLFKHHRIH), 497–519 (YGCSVCGKRFNQSATLIKHQRIH), and 525–547 (YKCLECGERFRQSTHLIRHQRIH). Residue Lys-443 forms a Glycyl lysine isopeptide (Lys-Gly) (interchain with G-Cter in SUMO2) linkage.

It belongs to the krueppel C2H2-type zinc-finger protein family.

The protein localises to the nucleus. Functionally, may be involved in transcriptional regulation. This is Zinc finger protein 394 (ZNF394) from Homo sapiens (Human).